The following is a 166-amino-acid chain: Regulator of ribonuclease activity A (166 aa).

It belongs to the RraA family. As to quaternary structure, homotrimer. Binds to both RNA-binding sites in the C-terminal region of Rne and to RhlB.

The protein localises to the cytoplasm. Functionally, globally modulates RNA abundance by binding to RNase E (Rne) and regulating its endonucleolytic activity. Can modulate Rne action in a substrate-dependent manner by altering the composition of the degradosome. Modulates RNA-binding and helicase activities of the degradosome. This chain is Regulator of ribonuclease activity A, found in Histophilus somni (strain 129Pt) (Haemophilus somnus).